Consider the following 535-residue polypeptide: Heat shock factor protein 2 (535 aa).

Glycyl lysine isopeptide (Lys-Gly) (interchain with G-Cter in SUMO2) cross-links involve residues K2, K82, K135, K139, K151, K210, K218, and K237. The DNA-binding element occupies 7–112; it reads VPAFLSKLWT…LLENIKRKVS (106 aa). The segment at 119 to 192 is hydrophobic repeat HR-A/B; it reads NKIRQEDLTK…VTLVQNNQLV (74 aa). The segment at 298–325 is disordered; that stretch reads QSGEQSEPAREPLRVGSAGSSSPLMSSA. Residues 313–325 show a composition bias toward low complexity; the sequence is GSAGSSSPLMSSA. The segment at 359–384 is hydrophobic repeat HR-C; the sequence is LLDYLDSIDCSLEDFQAMLSGRQFSI. Positions 418–437 are disordered; that stretch reads TKSSVVQHVSEEGRKSKSKP. Positions 426-437 are enriched in basic and acidic residues; it reads VSEEGRKSKSKP.

It belongs to the HSF family. In terms of assembly, DNA-binding homotrimer in stressed or heat shocked cells, otherwise found as a homodimer. In terms of tissue distribution, isoform alpha is expressed predominantly in testis while isoform beta is expressed predominantly in heart and brain.

Its subcellular location is the cytoplasm. The protein resides in the nucleus. In terms of biological role, DNA-binding protein that specifically binds heat shock promoter elements (HSE) and activates transcription. In higher eukaryotes, HSF is unable to bind to the HSE unless the cells are heat shocked. HSF2 is expressed in a form that binds DNA constitutively but loses DNA binding by incubation at greater than 41 degrees C. This is Heat shock factor protein 2 (Hsf2) from Mus musculus (Mouse).